Reading from the N-terminus, the 62-residue chain is Large ribosomal subunit protein bL32 (62 aa).

A compositionally biased stretch (basic residues) spans M1 to R16. A disordered region spans residues M1–E62. Residues V53–E62 are compositionally biased toward polar residues.

It belongs to the bacterial ribosomal protein bL32 family.

This Alcanivorax borkumensis (strain ATCC 700651 / DSM 11573 / NCIMB 13689 / SK2) protein is Large ribosomal subunit protein bL32.